The following is a 1193-amino-acid chain: Chloride channel protein 2 (1193 aa).

Over 1-168 (MVYFGDRQRD…WIWRHTVARL (168 aa)) the chain is Cytoplasmic. The interval 76–97 (SHAFYPCPPPAENARDSDSSDD) is disordered. Transmembrane regions (helical) follow at residues 169 to 204 (GEDWVFLALLGIIMALLSFIMDKGISICTNARIWLY) and 213 to 236 (VQYIAWVSLPVCLILFSAGFVHLI). The short motif at 242–246 (GSGIP) is the Selectivity filter part_1 element. S243 lines the chloride pocket. Residues 245–252 (IPEMKTIL) constitute an intramembrane region (helical). Helical transmembrane passes span 261–279 (LTFKTLVAKVIGLTATLGS) and 286–304 (EGPFVHIASIVAQLLSKLV). The short motif at 284–288 (GKEGP) is the Selectivity filter part_2 element. 2 consecutive intramembrane regions (helical) follow at residues 320–332 (MLAAACAVGVGAC) and 336–344 (PVGGVLFSI). A run of 5 helical transmembrane segments spans residues 356–373 (YWRGFFAAVCGATVFRLL), 402–430 (LFVFALIGLVCGLGGASYVWVHRRYVLFM), 439–458 (FLQKNRFLYPGFLALLVSSI), 511–530 (FGNLVIYTLFTFVVSIIAST), and 536–555 (GMFIPVFKIGAGFGRLVGEF). The short motif at 536–540 (GMFIP) is the Selectivity filter part_3 element. F538 is a binding site for chloride. Positions 576 to 590 (GGYAVVGAAAFSGSV) form an intramembrane region, helical. The note=Loop between two helices intramembrane region spans 591-592 (TH). An intramembrane region (helical) is located at residues 593–604 (TVSVAVIIFEMT). The note=Loop between two helices intramembrane region spans 605-609 (GQITH). A helical transmembrane segment spans residues 610 to 626 (VVPVMIAVLVANAVAAL). At 627 to 1193 (LQPSIYDSII…KSNTENGNHA (567 aa)) the chain is on the cytoplasmic side. Position 632 (Y632) interacts with chloride. Residues 663-723 (MVRDVKYIWH…KMIEKHIGRE (61 aa)) form the CBS 1 domain. Disordered stretches follow at residues 848 to 884 (TLQDVQPDPETGSLSPAASNHEVEVPRTPSTPGVSKK), 1103 to 1122 (NSFVPPTRDEDADEKPAVEK), and 1159 to 1193 (IKHTDKGTVSLTMPPQESKQSPSADKSNTENGNHA). Residues 1048–1105 (IDPSPFQLVERTSILKVHSLFSMVGINHAYVTKIGRLVGVVGLKELRKAIEDINSNSF) form the CBS 2 domain. Residues 1165–1193 (GTVSLTMPPQESKQSPSADKSNTENGNHA) show a composition bias toward polar residues.

This sequence belongs to the chloride channel (TC 2.A.49) family. As to expression, at embryonic stages 13-16, expressed in a subset of the midline cells of the midline primordium and in all of the midline glia. Expressed along the Z-line of the sarcomere in larval longitudinal muscles.

It localises to the membrane. In terms of biological role, voltage-gated chloride channel. Chloride channels have several functions including the regulation of cell volume; membrane potential stabilization, signal transduction and transepithelial transport. The chain is Chloride channel protein 2 (ClC-a) from Drosophila melanogaster (Fruit fly).